Consider the following 187-residue polypeptide: MREHAAWQPQAAAWRPGVAVVPGRPAPAVQRLLTERGSLTARLERLGPVRVHVLREAWQRPAPDEGVALELPVGRHAWLREVVLDCEGGPTIYARSIVPDRLLGPLARLPRLGERPLGRLLFSAADVQRGPLAVARLRGREPLVRWLRGHGLPSPAGGWARRSTLSVAGRRLLVTEVFFPEGVEGER.

Positions 80, 117, and 176 each coordinate substrate.

The protein belongs to the UbiC family.

Its subcellular location is the cytoplasm. It carries out the reaction chorismate = 4-hydroxybenzoate + pyruvate. The protein operates within cofactor biosynthesis; ubiquinone biosynthesis. Its function is as follows. Removes the pyruvyl group from chorismate, with concomitant aromatization of the ring, to provide 4-hydroxybenzoate (4HB) for the ubiquinone pathway. This Halorhodospira halophila (strain DSM 244 / SL1) (Ectothiorhodospira halophila (strain DSM 244 / SL1)) protein is Probable chorismate pyruvate-lyase.